A 3365-amino-acid polypeptide reads, in one-letter code: Probable serine/threonine-protein kinase roco9 (3365 aa).

Disordered regions lie at residues 1–177, 397–497, 944–985, 1044–1098, and 1261–1301; these read MTSI…KSSK, ESTE…QPPQ, PIKK…GFLS, IHQQ…NNKI, and QNNL…ISKG. The span at 8–27 shows a compositional bias: basic and acidic residues; it reads FDKKSKRSNEDTGEKEETKK. Low complexity-rich tracts occupy residues 51-84, 100-116, 137-169, and 397-415; these read LQQL…SLNT, STNS…STRS, SQTS…TVKT, and ESTE…TLEP. A Rho-GAP domain is found at 243-437; sequence TPLYSLIKRQ…RLPQQSSDDN (195 aa). A compositionally biased stretch (polar residues) spans 421 to 434; sequence PLSTSTQRLPQQSS. 5 stretches are compositionally biased toward low complexity: residues 435-445, 457-489, 959-974, 1044-1096, and 1262-1301; these read DDNSNNDNNNK, NNDN…QPKQ, SSPL…IPSK, IHQQ…NNNN, and NNLN…ISKG. Positions 804-1484 constitute a Myotubularin phosphatase domain; that stretch reads IWDIYSPLIE…DQIILWSSFF (681 aa). 16 LRR repeats span residues 1510-1526, 1527-1549, 1550-1572, 1576-1599, 1600-1622, 1624-1645, 1646-1668, 1670-1691, 1697-1720, 1722-1743, 1744-1770, 1772-1789, 1790-1812, 1814-1835, 1837-1861, and 1863-1887; these read SQKL…LSYF, STLT…IILL, SNLT…LLKL, KLKL…IYTL, STLT…ISKM, QLKC…LSLC, VGLE…FFKL, SLRM…KLDD, MNEI…MFEM, SLIH…LLDN, LVNL…LFKL, VLDL…HAML, PSLK…DFNL, LLSE…IGTK, LSLT…ALLK, and LKSL…DAIL. The segment covering 1932–1947 has biased composition (basic and acidic residues); that stretch reads SKEREKEKEKEKEKEK. Disordered regions lie at residues 1932–1963, 2190–2389, 2507–2567, and 2674–2704; these read SKER…DKDK, NNNN…NNGS, APST…LQTP, and SNQQ…TSIN. Low complexity-rich tracts occupy residues 2190-2205, 2216-2389, 2522-2567, and 2676-2688; these read NNNN…NNNN, SINN…NNGS, NNTS…LQTP, and QQQQ…STQH. The 262-residue stretch at 3008–3269 folds into the Protein kinase domain; the sequence is ELDPNPIGEG…KKLEEIELIL (262 aa). Residues 3014 to 3022 and lysine 3035 contribute to the ATP site; that span reads IGEGGTATV. Residue aspartate 3132 is the Proton acceptor of the active site. Residues 3311-3333 show a composition bias toward low complexity; the sequence is QQQKQQQLQQQKQSPKQLQQQKP. The interval 3311–3365 is disordered; the sequence is QQQKQQQLQQQKQSPKQLQQQKPLPTPPKQLSNNDSTPTKPLDDSSDSSSEDSNN. The segment covering 3354–3365 has biased composition (acidic residues); the sequence is DSSDSSSEDSNN.

The protein belongs to the protein kinase superfamily. TKL Ser/Thr protein kinase family. ROCO subfamily.

The enzyme catalyses L-seryl-[protein] + ATP = O-phospho-L-seryl-[protein] + ADP + H(+). It catalyses the reaction L-threonyl-[protein] + ATP = O-phospho-L-threonyl-[protein] + ADP + H(+). In Dictyostelium discoideum (Social amoeba), this protein is Probable serine/threonine-protein kinase roco9 (roco9).